Reading from the N-terminus, the 428-residue chain is UDP-N-acetylglucosamine 1-carboxyvinyltransferase 2 (428 aa).

Lysine 22–asparagine 23 lines the phosphoenolpyruvate pocket. Arginine 92 is a binding site for UDP-N-acetyl-alpha-D-glucosamine. The active-site Proton donor is cysteine 116. Cysteine 116 is subject to 2-(S-cysteinyl)pyruvic acid O-phosphothioketal. UDP-N-acetyl-alpha-D-glucosamine is bound by residues arginine 121–glutamine 125, aspartate 304, and isoleucine 326.

This sequence belongs to the EPSP synthase family. MurA subfamily.

The protein resides in the cytoplasm. It carries out the reaction phosphoenolpyruvate + UDP-N-acetyl-alpha-D-glucosamine = UDP-N-acetyl-3-O-(1-carboxyvinyl)-alpha-D-glucosamine + phosphate. The protein operates within cell wall biogenesis; peptidoglycan biosynthesis. Functionally, cell wall formation. Adds enolpyruvyl to UDP-N-acetylglucosamine. The sequence is that of UDP-N-acetylglucosamine 1-carboxyvinyltransferase 2 from Shouchella clausii (strain KSM-K16) (Alkalihalobacillus clausii).